Here is a 411-residue protein sequence, read N- to C-terminus: 2,3-bisphosphoglycerate-independent phosphoglycerate mutase (411 aa).

Belongs to the BPG-independent phosphoglycerate mutase family. A-PGAM subfamily.

It catalyses the reaction (2R)-2-phosphoglycerate = (2R)-3-phosphoglycerate. It participates in carbohydrate degradation; glycolysis; pyruvate from D-glyceraldehyde 3-phosphate: step 3/5. In terms of biological role, catalyzes the interconversion of 2-phosphoglycerate and 3-phosphoglycerate. The protein is 2,3-bisphosphoglycerate-independent phosphoglycerate mutase of Pyrobaculum calidifontis (strain DSM 21063 / JCM 11548 / VA1).